We begin with the raw amino-acid sequence, 302 residues long: Putative T-box protein 34 (302 aa).

The segment at residues 5–180 (IVNEHKYREL…KMNLAPGSSQ (176 aa)) is a DNA-binding region (T-box).

It is found in the nucleus. The sequence is that of Putative T-box protein 34 (tbx-34) from Caenorhabditis elegans.